The primary structure comprises 247 residues: Chymase (247 aa).

An N-terminal signal peptide occupies residues 1-17 (MCLLSLPLLLFLQYTRA). The propeptide at 18–21 (KAGE) is activation peptide. One can recognise a Peptidase S1 domain in the interval 22–245 (VIGGTECKPH…YRPWINKILK (224 aa)). A disulfide bridge connects residues Cys51 and Cys67. Catalysis depends on His66, which acts as the Charge relay system. N-linked (GlcNAc...) asparagine glycosylation is present at Asn103. Asp110 (charge relay system) is an active-site residue. N-linked (GlcNAc...) asparagine glycosylation is present at Asn121. Cystine bridges form between Cys144/Cys209 and Cys175/Cys188. Residue Ser203 is the Charge relay system of the active site.

This sequence belongs to the peptidase S1 family. Granzyme subfamily.

It localises to the secreted. The protein resides in the cytoplasmic granule. The enzyme catalyses Preferential cleavage: Phe-|-Xaa &gt; Tyr-|-Xaa &gt; Trp-|-Xaa &gt; Leu-|-Xaa.. Major secreted protease of mast cells with suspected roles in vasoactive peptide generation, extracellular matrix degradation, and regulation of gland secretion. This chain is Chymase, found in Cavia porcellus (Guinea pig).